The sequence spans 1129 residues: PAN2-PAN3 deadenylation complex catalytic subunit PAN2 (1129 aa).

WD repeat units lie at residues 20-60 (PPAV…YTSY), 104-146 (PDFK…DTLP), 148-183 (DAQY…VIKV), 186-226 (GHTG…FSLK), and 280-319 (LYDS…HFPE). Residues 320 to 457 (YSNPTEFADH…DLHLDDVTRK (138 aa)) form a linker region. The segment at 396-427 (RTKRRNQIEVTRQTDRSSDSLTPPKFLSEKSR) is disordered. The 373-residue stretch at 458–830 (DVPAMYGNVE…LPSVLTFQTK (373 aa)) folds into the USP domain. An Exonuclease domain is found at 880-1052 (VAIDAEFIRL…IEDATTALKL (173 aa)). Residues D883, E885, D992, and D1045 each contribute to the a divalent metal cation site. Positions 1083–1129 (APGSGNRNSMPAGMTATGAGRDTPEPMTTPKKGGAFGGVGFRSPMRR) are disordered.

It belongs to the peptidase C19 family. PAN2 subfamily. Forms a heterotrimer with an asymmetric homodimer of the regulatory subunit PAN3 to form the poly(A)-nuclease (PAN) deadenylation complex. A divalent metal cation serves as cofactor.

It localises to the cytoplasm. It catalyses the reaction Exonucleolytic cleavage of poly(A) to 5'-AMP.. Its activity is regulated as follows. Positively regulated by the regulatory subunit PAN3. Catalytic subunit of the poly(A)-nuclease (PAN) deadenylation complex, one of two cytoplasmic mRNA deadenylases involved in mRNA turnover. PAN specifically shortens poly(A) tails of RNA and the activity is stimulated by poly(A)-binding protein PAB1. PAN deadenylation is followed by rapid degradation of the shortened mRNA tails by the CCR4-NOT complex. Deadenylated mRNAs are then degraded by two alternative mechanisms, namely exosome-mediated 3'-5' exonucleolytic degradation, or deadenylation-dependent mRNA decaping and subsequent 5'-3' exonucleolytic degradation by XRN1. May also be involved in post-transcriptional maturation of mRNA poly(A) tails. The chain is PAN2-PAN3 deadenylation complex catalytic subunit PAN2 from Phaeosphaeria nodorum (strain SN15 / ATCC MYA-4574 / FGSC 10173) (Glume blotch fungus).